Reading from the N-terminus, the 196-residue chain is Peptidyl-tRNA hydrolase (196 aa).

Histidine 15 is a tRNA binding site. The active-site Proton acceptor is the histidine 20. Positions 66, 68, and 114 each coordinate tRNA.

It belongs to the PTH family. In terms of assembly, monomer.

It localises to the cytoplasm. The enzyme catalyses an N-acyl-L-alpha-aminoacyl-tRNA + H2O = an N-acyl-L-amino acid + a tRNA + H(+). Its function is as follows. Hydrolyzes ribosome-free peptidyl-tRNAs (with 1 or more amino acids incorporated), which drop off the ribosome during protein synthesis, or as a result of ribosome stalling. Functionally, catalyzes the release of premature peptidyl moieties from peptidyl-tRNA molecules trapped in stalled 50S ribosomal subunits, and thus maintains levels of free tRNAs and 50S ribosomes. The sequence is that of Peptidyl-tRNA hydrolase from Polynucleobacter asymbioticus (strain DSM 18221 / CIP 109841 / QLW-P1DMWA-1) (Polynucleobacter necessarius subsp. asymbioticus).